The chain runs to 242 residues: 2-C-methyl-D-erythritol 4-phosphate cytidylyltransferase (242 aa).

Belongs to the IspD/TarI cytidylyltransferase family. IspD subfamily.

The catalysed reaction is 2-C-methyl-D-erythritol 4-phosphate + CTP + H(+) = 4-CDP-2-C-methyl-D-erythritol + diphosphate. It functions in the pathway isoprenoid biosynthesis; isopentenyl diphosphate biosynthesis via DXP pathway; isopentenyl diphosphate from 1-deoxy-D-xylulose 5-phosphate: step 2/6. Its function is as follows. Catalyzes the formation of 4-diphosphocytidyl-2-C-methyl-D-erythritol from CTP and 2-C-methyl-D-erythritol 4-phosphate (MEP). The chain is 2-C-methyl-D-erythritol 4-phosphate cytidylyltransferase from Shewanella loihica (strain ATCC BAA-1088 / PV-4).